The primary structure comprises 172 residues: Shikimate kinase (172 aa).

Residue 14–19 (GAGKST) participates in ATP binding. Ser-18 contacts Mg(2+). Substrate-binding residues include Asp-36, Arg-60, and Gly-82. Arg-120 contacts ATP. Arg-140 lines the substrate pocket. Gln-157 is a binding site for ATP.

It belongs to the shikimate kinase family. As to quaternary structure, monomer. Mg(2+) serves as cofactor.

The protein resides in the cytoplasm. It carries out the reaction shikimate + ATP = 3-phosphoshikimate + ADP + H(+). The protein operates within metabolic intermediate biosynthesis; chorismate biosynthesis; chorismate from D-erythrose 4-phosphate and phosphoenolpyruvate: step 5/7. Its function is as follows. Catalyzes the specific phosphorylation of the 3-hydroxyl group of shikimic acid using ATP as a cosubstrate. The polypeptide is Shikimate kinase (Colwellia psychrerythraea (strain 34H / ATCC BAA-681) (Vibrio psychroerythus)).